The sequence spans 209 residues: Mitochondrial import inner membrane translocase subunit Tim23 (209 aa).

Transmembrane regions (helical) follow at residues 73–93 (FELA…FGAL), 125–145 (ALWA…GVII), and 181–197 (GLAG…YNNW).

Belongs to the Tim17/Tim22/Tim23 family. Component of the TIM23 complex at least composed of TIMM23, TIMM17 (TIMM17A or TIMM17B) and TIMM50; within this complex, directly interacts with TIMM50. The complex interacts with the TIMM44 component of the PAM complex and with DNAJC15. Upon mitochondrial depolarization, interacts with PINK1; the interaction is required for PINK1 accumulation at the outer mitochondrial membrane, kinase activation by autophosphorylation and PRKN recruitement to mitochondria.

Its subcellular location is the mitochondrion inner membrane. Its function is as follows. Essential component of the TIM23 complex, a complex that mediates the translocation of transit peptide-containing proteins across the mitochondrial inner membrane. Has a role in the activation of stress-induced mitophagy by protecting PINK1 from OMA1-mediated degradation and facilitating its accumulation at the outer mitochondrial membrane in response to depolarization. This is Mitochondrial import inner membrane translocase subunit Tim23 (Timm23) from Rattus norvegicus (Rat).